The sequence spans 451 residues: Enolase (451 aa).

(2R)-2-phosphoglycerate is bound at residue glutamine 167. Glutamate 209 functions as the Proton donor in the catalytic mechanism. Residues aspartate 250, glutamate 307, and aspartate 334 each coordinate Mg(2+). Positions 359, 388, 389, and 410 each coordinate (2R)-2-phosphoglycerate. Lysine 359 (proton acceptor) is an active-site residue.

It belongs to the enolase family. Mg(2+) serves as cofactor.

It localises to the cytoplasm. It is found in the secreted. The protein resides in the cell surface. The enzyme catalyses (2R)-2-phosphoglycerate = phosphoenolpyruvate + H2O. Its pathway is carbohydrate degradation; glycolysis; pyruvate from D-glyceraldehyde 3-phosphate: step 4/5. Its function is as follows. Catalyzes the reversible conversion of 2-phosphoglycerate (2-PG) into phosphoenolpyruvate (PEP). It is essential for the degradation of carbohydrates via glycolysis. In Mesomycoplasma hyopneumoniae (strain J / ATCC 25934 / NCTC 10110) (Mycoplasma hyopneumoniae), this protein is Enolase.